The primary structure comprises 405 residues: Arginine biosynthesis bifunctional protein ArgJ (405 aa).

Substrate contacts are provided by Thr-152, Lys-178, Thr-189, Glu-276, Asn-400, and Thr-405. Thr-189 serves as the catalytic Nucleophile.

This sequence belongs to the ArgJ family. As to quaternary structure, heterotetramer of two alpha and two beta chains.

The protein resides in the cytoplasm. The catalysed reaction is N(2)-acetyl-L-ornithine + L-glutamate = N-acetyl-L-glutamate + L-ornithine. It carries out the reaction L-glutamate + acetyl-CoA = N-acetyl-L-glutamate + CoA + H(+). It participates in amino-acid biosynthesis; L-arginine biosynthesis; L-ornithine and N-acetyl-L-glutamate from L-glutamate and N(2)-acetyl-L-ornithine (cyclic): step 1/1. Its pathway is amino-acid biosynthesis; L-arginine biosynthesis; N(2)-acetyl-L-ornithine from L-glutamate: step 1/4. Functionally, catalyzes two activities which are involved in the cyclic version of arginine biosynthesis: the synthesis of N-acetylglutamate from glutamate and acetyl-CoA as the acetyl donor, and of ornithine by transacetylation between N(2)-acetylornithine and glutamate. This is Arginine biosynthesis bifunctional protein ArgJ from Pseudomonas fluorescens (strain ATCC BAA-477 / NRRL B-23932 / Pf-5).